The sequence spans 69 residues: Large ribosomal subunit protein uL29 (69 aa).

Belongs to the universal ribosomal protein uL29 family.

This chain is Large ribosomal subunit protein uL29, found in Rhodospirillum centenum (strain ATCC 51521 / SW).